Here is a 110-residue protein sequence, read N- to C-terminus: uncharacterized protein (110 aa).

A run of 3 helical transmembrane segments spans residues 5 to 25 (ILAI…PIHL), 62 to 82 (FPII…AIVS), and 90 to 110 (GISI…LISI).

To A.fulgidus AF1754.

It localises to the cell membrane. This is an uncharacterized protein from Methanocaldococcus jannaschii (strain ATCC 43067 / DSM 2661 / JAL-1 / JCM 10045 / NBRC 100440) (Methanococcus jannaschii).